The sequence spans 719 residues: Solute carrier family 15 member 2 (719 aa).

Over 1–43 the chain is Cytoplasmic; that stretch reads MGKMKDKDVDAEKYEKAQRSPKLCGTNYPVSIAFIVVNEFCER. Residues 44–61 traverse the membrane as a helical segment; that stretch reads FSYYGMKAVLTLYFMNYL. At 62 to 69 the chain is on the extracellular side; it reads HWDKNLST. Residue asparagine 66 is glycosylated (N-linked (GlcNAc...) asparagine). A helical transmembrane segment spans residues 70 to 90; it reads AIYHAFSGLCYFTPLLGALIA. The Cytoplasmic portion of the chain corresponds to 91-99; sequence DSWLGKFKT. A helical transmembrane segment spans residues 100–120; sequence IIYLSIVYVIGHVVKSVGAIP. Topologically, residues 121 to 125 are extracellular; that stretch reads DVGDS. The helical transmembrane segment at 126–146 threads the bilayer; the sequence is TVHIALSMVGLGLIALGTGGI. Residues 147–169 lie on the Cytoplasmic side of the membrane; sequence KPCVAAFGGDQFDEDNIDERRKF. Residues 170-190 form a helical membrane-spanning segment; that stretch reads FSIFYMSINAGSVLSTIITPI. Residues 191–201 lie on the Extracellular side of the membrane; it reads LRGDVQCFGGD. Residues 202-222 form a helical membrane-spanning segment; it reads CYALAFGVPAALMVIALVVFI. Over 223 to 280 the chain is Cytoplasmic; it reads SGSGLYKKSPPEGNVLVRVCKCIGFAISNRWTNSKKSPKRSHWLDWAEEKYSKRLIQE. Residues 281-301 traverse the membrane as a helical segment; that stretch reads IKMVCRVLVLYIPLPMFWALF. Residues 302-334 are Extracellular-facing; it reads DQQGSRWTLQATRMNMDFGGGFIIKPDQMQMLN. The helical transmembrane segment at 335–355 threads the bilayer; the sequence is ALLILVFIPIFDMGIYPLVGL. Topologically, residues 356-367 are cytoplasmic; that stretch reads CRIKLTPLKKMA. The helical transmembrane segment at 368 to 388 threads the bilayer; that stretch reads TGMILAALAFCAATAVEVYVI. The Extracellular portion of the chain corresponds to 389 to 594; the sequence is KTVVEPPPAK…QANNIHIGWQ (206 aa). An extracellular domain (ECD) region spans residues 389–594; sequence KTVVEPPPAK…QANNIHIGWQ (206 aa). N-linked (GlcNAc...) asparagine glycans are attached at residues asparagine 481, asparagine 513, and asparagine 532. Residues 595–615 traverse the membrane as a helical segment; that stretch reads IPQYVFLTAGEVMFSITGLEF. The Cytoplasmic portion of the chain corresponds to 616–626; that stretch reads SYSQAPASMKS. The helical transmembrane segment at 627–647 threads the bilayer; it reads VLQAGWLMTVAFGNVIVLIVA. The Extracellular segment spans residues 648–657; it reads EGAGMEQWVE. Residues 658–678 form a helical membrane-spanning segment; it reads FLLFAALLVAVSIIFSIMAYF. Over 679-719 the chain is Cytoplasmic; it reads YTYVDPDQLDKLFKEDGDGGKVESSKKDELSLGDMPKQTKM. Basic and acidic residues predominate over residues 695 to 708; that stretch reads GDGGKVESSKKDEL. Residues 695 to 719 are disordered; sequence GDGGKVESSKKDELSLGDMPKQTKM.

The protein belongs to the major facilitator superfamily. Proton-dependent oligopeptide transporter (POT/PTR) (TC 2.A.17) family. In terms of tissue distribution, expressed in kidney, brain and gut. Also expressed weakly in eye, gill and skeletal muscle.

It is found in the apical cell membrane. The protein resides in the cytoplasmic vesicle. The protein localises to the phagosome membrane. Its subcellular location is the cell membrane. The catalysed reaction is a dipeptide(out) + 2 H(+)(out) = a dipeptide(in) + 2 H(+)(in). It catalyses the reaction N-acetyl-D-muramoyl-L-alanyl-D-isoglutamine(out) + 3 H(+)(out) = N-acetyl-D-muramoyl-L-alanyl-D-isoglutamine(in) + 3 H(+)(in). The enzyme catalyses glycyl-L-leucine(out) + 2 H(+)(out) = glycyl-L-leucine(in) + 2 H(+)(in). It carries out the reaction glycyl-L-lysine(out) + 2 H(+)(out) = glycyl-L-lysine(in) + 2 H(+)(in). The catalysed reaction is glycyl-L-glutamate(out) + 3 H(+)(out) = glycyl-L-glutamate(in) + 3 H(+)(in). It catalyses the reaction L-alanyl-L-alanine(out) + 2 H(+)(out) = L-alanyl-L-alanine(in) + 2 H(+)(in). The enzyme catalyses an L-amino acid tripeptide(out) + 2 H(+)(out) = an L-amino acid tripeptide(in) + 2 H(+)(in). It carries out the reaction carnosine(out) + 2 H(+)(out) = carnosine(in) + 2 H(+)(in). In terms of biological role, proton-coupled amino-acid transporter that transports oligopeptides of 2 to 4 amino acids with a preference for dipeptides. Transports neutral and anionic dipeptides with a proton to peptide stoichiometry of 2:1 or 3:1. The sequence is that of Solute carrier family 15 member 2 from Danio rerio (Zebrafish).